A 671-amino-acid chain; its full sequence is E3 ubiquitin-protein ligase pub2 (671 aa).

Residues Met-1–Leu-112 form the C2 domain. The 34-residue stretch at Gly-242–Asp-275 folds into the WW domain. An HECT domain is found at Ser-338 to Glu-671. The active-site Glycyl thioester intermediate is Cys-639.

Interacts with the E2 ubiquitin-conjugating enzyme ubc4.

The protein localises to the membrane. Its subcellular location is the cytoplasm. The enzyme catalyses S-ubiquitinyl-[E2 ubiquitin-conjugating enzyme]-L-cysteine + [acceptor protein]-L-lysine = [E2 ubiquitin-conjugating enzyme]-L-cysteine + N(6)-ubiquitinyl-[acceptor protein]-L-lysine.. It functions in the pathway protein modification; protein ubiquitination. Functionally, E3 ubiquitin-protein ligase which accepts ubiquitin from an E2 ubiquitin-conjugating enzyme in the form of a thioester and then directly transfers the ubiquitin to targeted substrates. The chain is E3 ubiquitin-protein ligase pub2 (pub2) from Schizosaccharomyces pombe (strain 972 / ATCC 24843) (Fission yeast).